The chain runs to 380 residues: Crotonobetainyl-CoA reductase (380 aa).

The protein belongs to the acyl-CoA dehydrogenase family. As to quaternary structure, homotetramer. The cofactor is FAD.

The protein localises to the cytoplasm. It catalyses the reaction 4-(trimethylamino)butanoyl-CoA + oxidized [electron-transfer flavoprotein] + H(+) = crotonobetainyl-CoA + reduced [electron-transfer flavoprotein]. Its pathway is amine and polyamine metabolism; carnitine metabolism. Functionally, catalyzes the reduction of crotonobetainyl-CoA to gamma-butyrobetainyl-CoA. This chain is Crotonobetainyl-CoA reductase, found in Citrobacter koseri (strain ATCC BAA-895 / CDC 4225-83 / SGSC4696).